Reading from the N-terminus, the 306-residue chain is Elongation factor Ts (306 aa).

Positions 80–83 (TDFV) are involved in Mg(2+) ion dislocation from EF-Tu.

This sequence belongs to the EF-Ts family.

It localises to the cytoplasm. Its function is as follows. Associates with the EF-Tu.GDP complex and induces the exchange of GDP to GTP. It remains bound to the aminoacyl-tRNA.EF-Tu.GTP complex up to the GTP hydrolysis stage on the ribosome. This is Elongation factor Ts from Methylorubrum populi (strain ATCC BAA-705 / NCIMB 13946 / BJ001) (Methylobacterium populi).